Reading from the N-terminus, the 335-residue chain is Probable peptide ABC transporter ATP-binding protein y4tR (335 aa).

The region spanning 15-264 (VRDLETHFYG…PTHPYTRALM (250 aa)) is the ABC transporter domain. 49 to 56 (GESGCGKS) lines the ATP pocket.

This sequence belongs to the ABC transporter superfamily.

The protein localises to the cell inner membrane. Its function is as follows. Probably part of a binding-protein-dependent transport system y4tOPQRS for a peptide. Probably responsible for energy coupling to the transport system. The polypeptide is Probable peptide ABC transporter ATP-binding protein y4tR (Sinorhizobium fredii (strain NBRC 101917 / NGR234)).